Here is a 170-residue protein sequence, read N- to C-terminus: Flavin reductase (NADPH) (170 aa).

This sequence belongs to the non-flavoprotein flavin reductase family.

The catalysed reaction is reduced riboflavin + NADP(+) = riboflavin + NADPH + 2 H(+). Functionally, catalyzes the NADH-dependent reduction of FAD to provide FADH2 for the halogenase RebH. This chain is Flavin reductase (NADPH) (rbmH), found in Lentzea aerocolonigenes (Lechevalieria aerocolonigenes).